A 704-amino-acid polypeptide reads, in one-letter code: CAP-Gly domain-containing linker protein 4 (704 aa).

3 ANK repeats span residues 65–101, 149–180, and 186–215; these read TSVS…NVND, TNMN…DVDA, and NFGT…NPAF. The 43-residue stretch at 303–345 folds into the CAP-Gly 1 domain; it reads GTTEFASGQWAGIELDEPEGKNNGSVGRVQYFKCAPKYGIFAP. A disordered region spans residues 353 to 479; sequence KDGRKTTTHT…SATSAANNSH (127 aa). Low complexity-rich tracts occupy residues 360 to 371, 423 to 432, and 440 to 461; these read THTPSTRATPHA, SMSSSSSSSS, and PKKL…SLPS. The CAP-Gly 2 domain maps to 504 to 546; that stretch reads GTTNFAPGYWYGIELEKPHGKNDGSVGGVQYFSCSPRYGIFAP. Ser556 and Ser608 each carry phosphoserine. In terms of domain architecture, CAP-Gly 3 spans 643–685; that stretch reads GPTDFASGIWLGLELRSAKGKNDGAVGDKRYFTCKPNYGVLVR.

This chain is CAP-Gly domain-containing linker protein 4 (Clip4), found in Mus musculus (Mouse).